The primary structure comprises 69 residues: U2-agatoxin-Ao1g (69 aa).

The N-terminal stretch at 1 to 20 (MKAIISLLLISAMVFSMIEA) is a signal peptide. The propeptide occupies 21–34 (VPVEEGLQLFEGER). Cystine bridges form between Cys-36/Cys-52, Cys-43/Cys-57, and Cys-51/Cys-67. Leu-68 is modified (leucine amide).

This sequence belongs to the neurotoxin 01 (U2-agtx) family. In terms of tissue distribution, expressed by the venom gland.

The protein resides in the secreted. Insect active toxin causing rapid but reversible paralysis in crickets. No activity shown in mammals. Does not show effect on mammalian voltage-gated calcium channels. In Agelena orientalis (Funnel-web spider), this protein is U2-agatoxin-Ao1g.